The chain runs to 159 residues: 3-hydroxyacyl-[acyl-carrier-protein] dehydratase FabZ (159 aa).

Histidine 62 is a catalytic residue.

This sequence belongs to the thioester dehydratase family. FabZ subfamily.

It localises to the cytoplasm. The catalysed reaction is a (3R)-hydroxyacyl-[ACP] = a (2E)-enoyl-[ACP] + H2O. In terms of biological role, involved in unsaturated fatty acids biosynthesis. Catalyzes the dehydration of short chain beta-hydroxyacyl-ACPs and long chain saturated and unsaturated beta-hydroxyacyl-ACPs. In Methylobacterium nodulans (strain LMG 21967 / CNCM I-2342 / ORS 2060), this protein is 3-hydroxyacyl-[acyl-carrier-protein] dehydratase FabZ.